The primary structure comprises 147 residues: Large ribosomal subunit protein bL9 (147 aa).

It belongs to the bacterial ribosomal protein bL9 family.

Functionally, binds to the 23S rRNA. The polypeptide is Large ribosomal subunit protein bL9 (Trichlorobacter lovleyi (strain ATCC BAA-1151 / DSM 17278 / SZ) (Geobacter lovleyi)).